The sequence spans 408 residues: Serine/threonine transporter SstT (408 aa).

9 consecutive transmembrane segments (helical) span residues 11–31, 43–63, 82–102, 141–161, 192–212, 216–236, 290–310, 316–336, and 363–383; these read LANGSLVLQILVGIIAGVSLA, FLGSLFVGALKAIAPILVFIL, IVVLYLFGTFAAALTAVLLSM, ALMTGNYIGILAWGVGLGLAL, IGIFGLVAATFAETGFAAIAG, LLAVLLGAMAIIALIVNPLIV, IPLGATINMGGAAITITVLTL, LGIQVDLLTALLLSVVAAISA, and VAMQVVAVGFIIGVIQDAAET.

The protein belongs to the dicarboxylate/amino acid:cation symporter (DAACS) (TC 2.A.23) family.

The protein localises to the cell inner membrane. The enzyme catalyses L-serine(in) + Na(+)(in) = L-serine(out) + Na(+)(out). It catalyses the reaction L-threonine(in) + Na(+)(in) = L-threonine(out) + Na(+)(out). Its function is as follows. Involved in the import of serine and threonine into the cell, with the concomitant import of sodium (symport system). This chain is Serine/threonine transporter SstT, found in Shewanella sp. (strain MR-4).